We begin with the raw amino-acid sequence, 519 residues long: Chloroethene reductive dehalogenase (519 aa).

The tat-type signal signal peptide spans 1-43 (MSKFHKTISRRDFMKGLGLAGAGIGAVAASAPVFHDIDELVSS). 2 consecutive 4Fe-4S ferredoxin-type domains span residues 388-420 (PTPPIDAGMFEFCKTCYICRDVCVSGGVHQEDE) and 435-465 (LGYRTDWSGCHNQCGMCQSSCPFTYLGLENA). Residues C400, C403, C406, C410, C444, C448, C451, and C455 each contribute to the [4Fe-4S] cluster site.

The protein belongs to the PceA family. [4Fe-4S] cluster serves as cofactor. Requires corrinoid as cofactor. Predicted to be exported by the Tat system. The position of the signal peptide cleavage has been experimentally proven.

It is found in the cell membrane. It catalyses the reaction chloroethene + AH2 = ethene + chloride + A + H(+). The enzyme catalyses (Z)-1,2-dichloroethene + AH2 = chloroethene + chloride + A + H(+). The catalysed reaction is 1,1-dichloroethene + AH2 = chloroethene + chloride + A + H(+). Its function is as follows. Catalyzes the reductive dechlorination of chloroethene (or vinyl chloride, VC) to ethene. Can also reduce all dichloroethene (DCE) isomers, but not tetrachloroethene (PCE) or trichloroethene (TCE), at high rates. Reduced methyl viologen can act as the artificial electron donor. The chain is Chloroethene reductive dehalogenase from Dehalococcoides mccartyi (strain VS).